The sequence spans 739 residues: Catalase-peroxidase (739 aa).

The tract at residues 1 to 20 is disordered; that stretch reads MGSNECPYSRQNANIGGGGQ. A cross-link (tryptophyl-tyrosyl-methioninium (Trp-Tyr) (with M-243)) is located at residues 94–217; sequence WHSAGTYRVF…LAASHMGLIY (124 aa). His-95 acts as the Proton acceptor in catalysis. Positions 217–243 form a cross-link, tryptophyl-tyrosyl-methioninium (Tyr-Met) (with W-94); sequence YVNPEGPNKNPDPVLAAKDIRITFGRM. His-258 is a heme b binding site.

Belongs to the peroxidase family. Peroxidase/catalase subfamily. As to quaternary structure, homodimer or homotetramer. Requires heme b as cofactor. Post-translationally, formation of the three residue Trp-Tyr-Met cross-link is important for the catalase, but not the peroxidase activity of the enzyme.

It localises to the cytoplasm. The enzyme catalyses H2O2 + AH2 = A + 2 H2O. It catalyses the reaction 2 H2O2 = O2 + 2 H2O. Functionally, bifunctional enzyme with both catalase and broad-spectrum peroxidase activity. This is Catalase-peroxidase from Emericella nidulans (strain FGSC A4 / ATCC 38163 / CBS 112.46 / NRRL 194 / M139) (Aspergillus nidulans).